A 196-amino-acid chain; its full sequence is Guanylate kinase (196 aa).

The 182-residue stretch at 8 to 189 (GKIIIISGPS…AADKLRHILY (182 aa)) folds into the Guanylate kinase-like domain. Residue 15 to 22 (GPSGVGKK) participates in ATP binding.

This sequence belongs to the guanylate kinase family.

It is found in the cytoplasm. The catalysed reaction is GMP + ATP = GDP + ADP. Functionally, essential for recycling GMP and indirectly, cGMP. In Malacoplasma penetrans (strain HF-2) (Mycoplasma penetrans), this protein is Guanylate kinase.